The primary structure comprises 443 residues: MDYTPQNQKDKKKMLETIGIDDVSELFDTIPKDLRAKKLNISGGKTEQELLNYFSDIASENKVLISFRGAGIYDHYIPSLVGEVIGRSEFWTAYTPYQAEASQGTLQSIFEYQSLICALTGLDTSNASLYDGATATAEAVLLALRASGKNKILISQGLHPEYMQTVKTYLENSKAEIVTLNISENGVIEKDAVDASVDDDTAAVIIQSPNFFGVVEDMQALSTVIKSRNSLFVAVLNPLSLGVFMSPGEYKADIAVGEGQVLGSAMRAGGATFGFMAVKKALEWKMPGRIAGQTTDKNGNRGFVLTLQSREQHIRREKATSNICTSASLNALAGCVFLSGWGNDGFKNLAEINISKARYAFNKIKSLKGFKSKFENKVFFNEFVIETSKNIKKIQNILLKNGILGPLDLSCINENFKNCLLFCVTEQRTKAEINRLTEILAEA.

It belongs to the GcvP family. N-terminal subunit subfamily. The glycine cleavage system is composed of four proteins: P, T, L and H. In this organism, the P 'protein' is a heterodimer of two subunits.

It carries out the reaction N(6)-[(R)-lipoyl]-L-lysyl-[glycine-cleavage complex H protein] + glycine + H(+) = N(6)-[(R)-S(8)-aminomethyldihydrolipoyl]-L-lysyl-[glycine-cleavage complex H protein] + CO2. Functionally, the glycine cleavage system catalyzes the degradation of glycine. The P protein binds the alpha-amino group of glycine through its pyridoxal phosphate cofactor; CO(2) is released and the remaining methylamine moiety is then transferred to the lipoamide cofactor of the H protein. This is Probable glycine dehydrogenase (decarboxylating) subunit 1 from Endomicrobium trichonymphae.